We begin with the raw amino-acid sequence, 227 residues long: MSAVPLRILCIHGYRQNGNSFREKTGALRKLLKKQVELVFISAPHQVPAIQEENCGTNQQSQTVSVGDEDQRGWWFSDVQARSFNAKQDCESSLGLEESIEAVKAALKDLGPFSGILGFSQGAALVAMLCALQEQKLEPDFNFRFAILVAGFRSACLEHQRFYEGPVITIPSLHVFGQDDRVIPEEMSRDLLPAFDGAQVLLHPGGHFVPAASSHRQTYQDFLKRFQ.

Catalysis depends on charge relay system residues Ser120, Asp180, and His207.

The protein belongs to the LovG family.

It catalyses the reaction a carboxylic ester + H2O = an alcohol + a carboxylate + H(+). Functionally, exhibits ester hydrolase activity with a strong preference for long-chain alkyl ester substrates and high selectivity against a variety of short, branched, and substituted esters. Is able to hydrolyze ester bonds within a wide range of p-nitrophenyl derivatives (C2-C14) in vitro, with a strong preference toward substrates of &gt;8 carbons. The polypeptide is Esterase OVCA2 (ovca2) (Danio rerio (Zebrafish)).